Reading from the N-terminus, the 328-residue chain is Glycerol-3-phosphate dehydrogenase [NAD(P)+] (328 aa).

The NADPH site is built by Trp15, His35, Tyr51, and Lys107. 3 residues coordinate sn-glycerol 3-phosphate: Lys107, Gly135, and Ser137. Ala139 serves as a coordination point for NADPH. Lys190, Asp243, Ser253, Arg254, and Asn255 together coordinate sn-glycerol 3-phosphate. The active-site Proton acceptor is the Lys190. Residue Arg254 participates in NADPH binding. 2 residues coordinate NADPH: Leu276 and Glu278.

The protein belongs to the NAD-dependent glycerol-3-phosphate dehydrogenase family.

The protein resides in the cytoplasm. The catalysed reaction is sn-glycerol 3-phosphate + NAD(+) = dihydroxyacetone phosphate + NADH + H(+). It catalyses the reaction sn-glycerol 3-phosphate + NADP(+) = dihydroxyacetone phosphate + NADPH + H(+). It participates in membrane lipid metabolism; glycerophospholipid metabolism. Its function is as follows. Catalyzes the reduction of the glycolytic intermediate dihydroxyacetone phosphate (DHAP) to sn-glycerol 3-phosphate (G3P), the key precursor for phospholipid synthesis. The sequence is that of Glycerol-3-phosphate dehydrogenase [NAD(P)+] from Rhodopseudomonas palustris (strain BisA53).